Here is a 1423-residue protein sequence, read N- to C-terminus: Autophagy-related protein 11 (1423 aa).

Coiled-coil stretches lie at residues 551–589 and 625–978; these read DDEL…QSQA and SEGT…ASEL. Disordered regions lie at residues 583–660 and 1028–1048; these read LHRQ…SNRA and RAER…SLRK. A compositionally biased stretch (polar residues) spans 585-602; it reads RQSQASRPGNLFQPQTNS. Residues 631-648 are compositionally biased toward basic and acidic residues; it reads LLRRISELENELREEKQR. Polar residues-rich tracts occupy residues 650-660 and 1034-1047; these read SRIQNDLSNRA and QNPN…TSLR. The stretch at 1102–1130 forms a coiled coil; it reads HRIKEVEHKARKWQKEARSYRDRAHIAQK. The interval 1327 to 1423 is disordered; it reads SLRAAAPETP…DYTYESPGKK (97 aa). The span at 1383-1395 shows a compositional bias: basic and acidic residues; it reads KTAEPRRMLDRQE.

Belongs to the ATG11 family. In terms of assembly, homodimer and potential homooligomers. Interacts with ATG1 kinase and the ATG19 and ATG34 cargo protein transporters. Interacts with ATG9, ATG17 and ATG20.

It is found in the preautophagosomal structure membrane. The protein localises to the vacuole membrane. In terms of biological role, involved in cytoplasm to vacuole transport (Cvt), pexophagy, mitophagy and nucleophagy. Recruits mitochondria for their selective degradation via autophagy (mitophagy) during starvation, through its interaction with ATG32. Works as scaffold proteins that recruit ATG proteins to the pre-autophagosome (PAS), the site of vesicle/autophagosome formation. Required for ATG9 anterograde transport from the mitochondria to the PAS. Also recruits the ATG19-prAPE1 complex to the PAS. Required for the Cvt vesicles completion. Plays a role in morphological differentiation and cephalosporin production. The sequence is that of Autophagy-related protein 11 from Hapsidospora chrysogena (Acremonium chrysogenum).